The chain runs to 371 residues: Mannose-1-phosphate guanylyltransferase catalytic subunit beta (371 aa).

A substrate-binding domain region spans residues 14-233; the sequence is RALILVGGYG…TGFWMDIGQP (220 aa). A GDP-alpha-D-mannose-binding site is contributed by D122. D122 is a Mg(2+) binding site. The active site involves K173. D229 is a GDP-alpha-D-mannose binding site. D229 lines the Mg(2+) pocket. A hexapeptide repeat domain region spans residues 256-371; the sequence is YTGPGVVGNV…ASVPEPQIIM (116 aa).

This sequence belongs to the transferase hexapeptide repeat family. Component of the GMPPA-GMPPB mannose-1-phosphate guanylyltransferase complex composed of 4 Gmppa subunits and 8 Gmppb subunits; the complex is organized into three layers, a central layer made up of 2 Gmppa dimers sandwiched between two layers each made up of 2 Gmppb dimers. Gmppb catalytic activity is reduced when part of the complex and binding of GDP-alpha-D-Mannose by Gmppa induces allosteric feedback inhibition of Gmppb. Mg(2+) serves as cofactor.

It catalyses the reaction alpha-D-mannose 1-phosphate + GTP + H(+) = GDP-alpha-D-mannose + diphosphate. It functions in the pathway nucleotide-sugar biosynthesis; GDP-alpha-D-mannose biosynthesis; GDP-alpha-D-mannose from alpha-D-mannose 1-phosphate (GTP route): step 1/1. With respect to regulation, enzyme activity is reduced by incorporation into the GMPPA-GMPPB mannose-1-phosphate guanylyltransferase complex. Allosterically inhibited, when part of the GMPPA-GMPPB complex, by GDP-alpha-D-mannose binding to Gmppa. Catalytic subunit of the GMPPA-GMPPB mannose-1-phosphate guanylyltransferase complex. Catalyzes the formation of GDP-mannose, an essential precursor of glycan moieties of glycoproteins and glycolipids. Can catalyze the reverse reaction in vitro. Together with GMPPA regulates GDP-alpha-D-mannose levels. The sequence is that of Mannose-1-phosphate guanylyltransferase catalytic subunit beta from Drosophila pseudoobscura pseudoobscura (Fruit fly).